The following is a 377-amino-acid chain: Chaperone protein DnaJ (377 aa).

A J domain is found at 5 to 70 (DFYEVLGVDR…EKRSAYDRMG (66 aa)). The CR-type zinc finger occupies 136–214 (GCKKEISFTA…CHGTGVKDKS (79 aa)). Residues Cys-149, Cys-152, Cys-166, Cys-169, Cys-188, Cys-191, Cys-202, and Cys-205 each coordinate Zn(2+). CXXCXGXG motif repeat units lie at residues 149–156 (CETCDGKG), 166–173 (CSTCGGHG), 188–195 (CPNCGGSG), and 202–209 (CNDCHGTG). Residues 353–377 (LDGDSKHHQSPKKKSFFEKLGDLFD) are disordered. The span at 367–377 (SFFEKLGDLFD) shows a compositional bias: basic and acidic residues.

This sequence belongs to the DnaJ family. In terms of assembly, homodimer. Zn(2+) serves as cofactor.

Its subcellular location is the cytoplasm. Participates actively in the response to hyperosmotic and heat shock by preventing the aggregation of stress-denatured proteins and by disaggregating proteins, also in an autonomous, DnaK-independent fashion. Unfolded proteins bind initially to DnaJ; upon interaction with the DnaJ-bound protein, DnaK hydrolyzes its bound ATP, resulting in the formation of a stable complex. GrpE releases ADP from DnaK; ATP binding to DnaK triggers the release of the substrate protein, thus completing the reaction cycle. Several rounds of ATP-dependent interactions between DnaJ, DnaK and GrpE are required for fully efficient folding. Also involved, together with DnaK and GrpE, in the DNA replication of plasmids through activation of initiation proteins. In Psychrobacter sp. (strain PRwf-1), this protein is Chaperone protein DnaJ.